Consider the following 337-residue polypeptide: Trace amine-associated receptor 5 (337 aa).

Topologically, residues 1 to 38 are extracellular; that stretch reads MRAVLLPGSGEQPTAFCYQVNGSCPRTVHPLAIQVVIY. N-linked (GlcNAc...) asparagine glycosylation occurs at N21. Disulfide bonds link C24–C188 and C99–C192. The chain crosses the membrane as a helical span at residues 39 to 59; sequence LACAVGVLITVLGNLFVVFAV. At 60–70 the chain is on the cytoplasmic side; sequence SYFKVLHTPTN. The helical transmembrane segment at 71–91 threads the bilayer; that stretch reads FLLLSLALADMLLGLLVLPLS. Topologically, residues 92 to 109 are extracellular; it reads TVRSVESCWFFGDFLCRL. Residues 110 to 130 traverse the membrane as a helical segment; that stretch reads HTYLDTLFCLTSIFHLCFISI. The Cytoplasmic portion of the chain corresponds to 131-154; it reads DRHCAICDPLLYPSKFTVRTALRY. A helical transmembrane segment spans residues 155-175; the sequence is IVAGWGIPAAYTAFFLYTDVV. Residues 176 to 189 are extracellular Loop 2 (ECL2); it reads ERALSQWLEEMPCV. The Extracellular portion of the chain corresponds to 176–204; the sequence is ERALSQWLEEMPCVGSCQLLFNKFWGWLN. Residues 205-225 form a helical membrane-spanning segment; sequence FPAFFVPCLIMISLYLKIFVV. Residues 226–253 are Cytoplasmic-facing; sequence ATRQAQQIRTLSQSLAGAVKRERKAAKT. The helical transmembrane segment at 254-274 threads the bilayer; the sequence is LGIAVGIYLVCWLPFTVDTLV. Topologically, residues 275-284 are extracellular; it reads DSLLNFITPP. The chain crosses the membrane as a helical span at residues 285–307; it reads LVFDIFIWFAYFNSACNPIIYVF. Topologically, residues 308 to 337 are cytoplasmic; the sequence is SYRWFRKALKLLLSREIFSPRTPTVDLYHD.

The protein belongs to the G-protein coupled receptor 1 family. As to expression, specifically expressed in neurons of the olfactory epithelium, to discrete glomeruli predominantly localized to a confined bulb region. Present in the dorsal area of the main olfactory epithelium. Also present in the limbic brain areas receiving projection from the olfactory system and involved in the regulation of emotions. Also expressed in some brain regions outside the olfactory epithelium, such as the hippocampus, cerebellum, cortex, raphe nuclei, hypothalamus, and habenula.

It is found in the cell membrane. Its activity is regulated as follows. Inhibited by 1-[(5,5- diphenyloxolan-2-yl)methyl]-4-(2-methoxyphenyl)piperazine and N-[(2,2-diphenyl-1,3-dioxolan-4-yl)methyl]-2-(2- methoxyphenoxy)ethan-1-amine small molecules. Functionally, olfactory receptor specific for trimethylamine, a trace amine enriched in the urine of male mice, playing a role in social behavior. Also activated by N-methylpiperidine. Trimethylamine is present at high concentration in the urine of male mice after puberty and acts as an attractant. Trimethylamine-binding causes a conformation change that triggers signaling via G(s)-class of G alpha proteins (GNAL or GNAS). Also required to provide olfactory input into limbic brain areas to regulate emotional behaviors likely via modulation of the serotonin system. In Mus musculus (Mouse), this protein is Trace amine-associated receptor 5.